Here is a 181-residue protein sequence, read N- to C-terminus: Adenylate kinase (181 aa).

10 to 15 contributes to the ATP binding site; sequence GAGKGT. The NMP stretch occupies residues 30–59; that stretch reads STGELFRSNIENGTKLGLEAKRYLDAGDLV. AMP contacts are provided by residues Thr31, Arg36, 57–59, 85–88, and Gln92; these read DLV and GFPR. The interval 126-132 is LID; it reads ARGRADD. Position 127 (Arg127) interacts with ATP. Positions 129 and 140 each coordinate AMP. An ATP-binding site is contributed by Gly166.

It belongs to the adenylate kinase family. Monomer.

The protein localises to the cytoplasm. The enzyme catalyses AMP + ATP = 2 ADP. It functions in the pathway purine metabolism; AMP biosynthesis via salvage pathway; AMP from ADP: step 1/1. Catalyzes the reversible transfer of the terminal phosphate group between ATP and AMP. Plays an important role in cellular energy homeostasis and in adenine nucleotide metabolism. This Mycolicibacterium paratuberculosis (strain ATCC BAA-968 / K-10) (Mycobacterium paratuberculosis) protein is Adenylate kinase.